Reading from the N-terminus, the 306-residue chain is Ribonuclease Z (306 aa).

Zn(2+) is bound by residues His-63, His-65, Asp-67, His-68, His-141, Asp-211, and His-269. The active-site Proton acceptor is Asp-67.

It belongs to the RNase Z family. As to quaternary structure, homodimer. Zn(2+) is required as a cofactor.

The catalysed reaction is Endonucleolytic cleavage of RNA, removing extra 3' nucleotides from tRNA precursor, generating 3' termini of tRNAs. A 3'-hydroxy group is left at the tRNA terminus and a 5'-phosphoryl group is left at the trailer molecule.. Its function is as follows. Zinc phosphodiesterase, which displays some tRNA 3'-processing endonuclease activity. Probably involved in tRNA maturation, by removing a 3'-trailer from precursor tRNA. The protein is Ribonuclease Z of Staphylococcus epidermidis (strain ATCC 35984 / DSM 28319 / BCRC 17069 / CCUG 31568 / BM 3577 / RP62A).